The primary structure comprises 420 residues: Mannose-1-phosphate guanylyltransferase regulatory subunit alpha (420 aa).

A substrate-binding domain region spans residues 2–251 (LKAVILIGGP…DGIWSQIKSA (250 aa)). Residues Glu-85 and Gln-247 each contribute to the GDP-alpha-D-mannose site. A hexapeptide repeat domain region spans residues 273 to 420 (LAKHTPGGPR…SRSFTNQIIL (148 aa)). A C-loop region spans residues 356 to 384 (TPNDPNPNDPRAHMDSESLFKDGKLLPAI).

Belongs to the transferase hexapeptide repeat family. As to quaternary structure, component of the GMPPA-GMPPB mannose-1-phosphate guanylyltransferase complex composed of 4 GMPPA subunits and 8 GMPPB subunits; the complex is organized into three layers, a central layer made up of 2 GMPPA dimers sandwiched between two layers each made up of 2 GMPPB dimers. In terms of tissue distribution, expressed in the liver (at protein level).

The protein resides in the cytoplasm. In terms of biological role, regulatory subunit of the GMPPA-GMPPB mannose-1-phosphate guanylyltransferase complex; reduces the catalytic activity of GMPPB when part of the complex. Mediates allosteric feedback inhibition of GMPPB catalytic activity upon binding GDP-alpha-D-mannose. Together with GMPPB regulates GDP-alpha-D-mannose levels. The chain is Mannose-1-phosphate guanylyltransferase regulatory subunit alpha (GMPPA) from Sus scrofa (Pig).